The following is a 469-amino-acid chain: MDITPFLDKKSKTPLYEQLYTFFKQEISHARITKGTRLPSKRRLSSLLDVSTATIERAYEQLTAEGYVKSKPKIGWFAAEVEPGFPTAPDHFQQSVQPGLHQKNAPAIDFHQGSVDPTLFPFNAWRKSIVKSLDRYSGSFHTSGDPQGEYELRHMIARFVRLSRGVNCEPGQIIIGAGTTVLLQNLCLSLKPGTKIGFEEPGFHRSRRMFEANHMDVTPICSDAEGVLPDELYRQNPYLMYTTPSHQFPIGTIMTITRRQELLAWAAETNSFIIEDDYDGEFRYSGHPIPSLQGLDPNGRVIYLGTFSKSLLPSLRLSFMIVPPELMEPIQNNVQLMKQTVSAHSQLALADFIETGEWQKHINRMRSLYRKKHAVLLEAIRSELGNTVEILGKNSGLHILLRLLFPASEEEAIQAAADHGVTLYPVSPSYIEQTPFTSVLIGYGGLSEEDIRLGIQKLKTAWAPLISSY.

Residues 13-81 form the HTH gntR-type domain; the sequence is TPLYEQLYTF…PKIGWFAAEV (69 aa). The H-T-H motif DNA-binding region spans 41-60; that stretch reads KRRLSSLLDVSTATIERAYE. K309 carries the N6-(pyridoxal phosphate)lysine modification.

This sequence in the C-terminal section; belongs to the class-I pyridoxal-phosphate-dependent aminotransferase family. Pyridoxal 5'-phosphate is required as a cofactor.

This is an uncharacterized protein from Bacillus subtilis (strain 168).